The following is a 248-amino-acid chain: Protein FAM133A (248 aa).

Residues 68 to 80 are compositionally biased toward basic and acidic residues; that stretch reads NWKKELEKSREKL. Positions 68 to 248 are disordered; that stretch reads NWKKELEKSR…KKSGSSHKSR (181 aa). Over residues 90-102 the composition is skewed to basic residues; sequence KRERKKKRKKKSC. Residues 103 to 118 show a composition bias toward low complexity; sequence RSSSSSSSSDSSSSSS. A compositionally biased stretch (basic residues) spans 127-138; it reads QGKRRKKKKNRS. Composition is skewed to basic and acidic residues over residues 147-156, 163-175, and 211-220; these read HESESESKES, SKDE…DVRS, and RCEEREQAKE. Residues 221-248 are compositionally biased toward basic residues; that stretch reads KVKKKKKKQHKKHSKKKKKKSGSSHKSR.

Belongs to the FAM133 family.

The polypeptide is Protein FAM133A (FAM133A) (Homo sapiens (Human)).